Here is a 251-residue protein sequence, read N- to C-terminus: HTH-type transcriptional regulator UlaR (251 aa).

In terms of domain architecture, HTH deoR-type spans 3-58 (EAQRHQILLEMLAQLGFVTVEKVVERLGISPATARRDINKLDERGKLKKVRNGAEA). The segment at residues 20-39 (VTVEKVVERLGISPATARRD) is a DNA-binding region (H-T-H motif).

The protein localises to the cytoplasm. Its function is as follows. Represses ulaG and the ulaABCDEF operon. This is HTH-type transcriptional regulator UlaR from Shigella sonnei (strain Ss046).